The following is a 661-amino-acid chain: Transketolase (661 aa).

Histidine 28 contributes to the substrate binding site. Residues histidine 68 and 116–118 (GPL) each bind thiamine diphosphate. Glutamate 157 contacts Mg(2+). Thiamine diphosphate is bound by residues glycine 158 and asparagine 187. Residues asparagine 187 and isoleucine 189 each coordinate Mg(2+). Residues histidine 261 and arginine 358 each coordinate substrate. Histidine 261 provides a ligand contact to thiamine diphosphate. The active-site Proton donor is the glutamate 412. Phenylalanine 438 provides a ligand contact to thiamine diphosphate. The substrate site is built by histidine 462, aspartate 470, and arginine 521.

This sequence belongs to the transketolase family. As to quaternary structure, homodimer. Mg(2+) serves as cofactor. Requires Ca(2+) as cofactor. Mn(2+) is required as a cofactor. It depends on Co(2+) as a cofactor. The cofactor is thiamine diphosphate.

The catalysed reaction is D-sedoheptulose 7-phosphate + D-glyceraldehyde 3-phosphate = aldehydo-D-ribose 5-phosphate + D-xylulose 5-phosphate. Its function is as follows. Catalyzes the transfer of a two-carbon ketol group from a ketose donor to an aldose acceptor, via a covalent intermediate with the cofactor thiamine pyrophosphate. In Treponema pallidum (strain Nichols), this protein is Transketolase (tkt).